Consider the following 425-residue polypeptide: Stabilizer of axonemal microtubules 4 (425 aa).

Disordered regions lie at residues 259 to 297 (RGSD…YQPP) and 315 to 335 (NKEP…SYEQ). Positions 260-272 (GSDRDTGYSRVSE) are enriched in basic and acidic residues. Residues 277–290 (PRMPTPSSQPTSMS) show a composition bias toward low complexity. Over residues 321–332 (FTLNNPSYVRSS) the composition is skewed to polar residues.

As to quaternary structure, microtubule inner protein component of sperm flagellar doublet microtubules. Interacts with PPP1CA. As to expression, expressed in brain, ovaries and testis. Expressed in the tracheal epithelium and in secondary spermatocytes and spermatids present in the seminiferous tubule. Expressed in ependymal cells lining the ventricular walls of the brain.

The protein localises to the cell projection. It is found in the cilium. It localises to the cytoplasm. Its subcellular location is the cytoskeleton. The protein resides in the flagellum axoneme. The polypeptide is Stabilizer of axonemal microtubules 4 (Rattus norvegicus (Rat)).